The following is a 130-amino-acid chain: DNA-directed RNA polymerase subunit omega (130 aa).

Residues 108 to 130 (TEEELLKGLEGLAPPEEQPEEDE) form a disordered region.

This sequence belongs to the RNA polymerase subunit omega family. The RNAP catalytic core consists of 2 alpha, 1 beta, 1 beta' and 1 omega subunit. When a sigma factor is associated with the core the holoenzyme is formed, which can initiate transcription.

It catalyses the reaction RNA(n) + a ribonucleoside 5'-triphosphate = RNA(n+1) + diphosphate. Promotes RNA polymerase assembly. Latches the N- and C-terminal regions of the beta' subunit thereby facilitating its interaction with the beta and alpha subunits. The sequence is that of DNA-directed RNA polymerase subunit omega from Rhodopseudomonas palustris (strain ATCC BAA-98 / CGA009).